Consider the following 211-residue polypeptide: Endo-1,4-beta-xylanase 6 (211 aa).

Residues 1-16 (MKVTAAFAGLLVTALA) form the signal peptide. Residues 19–210 (APEPVLVSRS…GAGSASVTIS (192 aa)) enclose the GH11 domain. Glu106 (nucleophile) is an active-site residue. The active-site Proton donor is Glu197.

This sequence belongs to the glycosyl hydrolase 11 (cellulase G) family.

Its subcellular location is the secreted. It catalyses the reaction Endohydrolysis of (1-&gt;4)-beta-D-xylosidic linkages in xylans.. The protein operates within glycan degradation; xylan degradation. Its function is as follows. Endo-1,4-beta-xylanase involved in the hydrolysis of xylan, a major structural heterogeneous polysaccharide found in plant biomass representing the second most abundant polysaccharide in the biosphere, after cellulose. The chain is Endo-1,4-beta-xylanase 6 (XYN6) from Aspergillus niger.